A 151-amino-acid chain; its full sequence is Phosphoribosyl-AMP cyclohydrolase (151 aa).

Aspartate 94 contacts Mg(2+). Cysteine 95 provides a ligand contact to Zn(2+). 2 residues coordinate Mg(2+): aspartate 96 and aspartate 98. Residues cysteine 112 and cysteine 119 each contribute to the Zn(2+) site.

The protein belongs to the PRA-CH family. Homodimer. Mg(2+) is required as a cofactor. Requires Zn(2+) as cofactor.

Its subcellular location is the cytoplasm. It carries out the reaction 1-(5-phospho-beta-D-ribosyl)-5'-AMP + H2O = 1-(5-phospho-beta-D-ribosyl)-5-[(5-phospho-beta-D-ribosylamino)methylideneamino]imidazole-4-carboxamide. It functions in the pathway amino-acid biosynthesis; L-histidine biosynthesis; L-histidine from 5-phospho-alpha-D-ribose 1-diphosphate: step 3/9. Catalyzes the hydrolysis of the adenine ring of phosphoribosyl-AMP. This Rhodopseudomonas palustris (strain TIE-1) protein is Phosphoribosyl-AMP cyclohydrolase.